We begin with the raw amino-acid sequence, 117 residues long: UPF0122 protein Dred_2057 (117 aa).

It belongs to the UPF0122 family.

Might take part in the signal recognition particle (SRP) pathway. This is inferred from the conservation of its genetic proximity to ftsY/ffh. May be a regulatory protein. This chain is UPF0122 protein Dred_2057, found in Desulforamulus reducens (strain ATCC BAA-1160 / DSM 100696 / MI-1) (Desulfotomaculum reducens).